A 105-amino-acid chain; its full sequence is Nitrogen fixation nifHD1 region GlnB-like protein 1 (105 aa).

It belongs to the P(II) protein family.

Its function is as follows. Could be involved in the regulation of nitrogen fixation. This is Nitrogen fixation nifHD1 region GlnB-like protein 1 (glnBA) from Methanosarcina barkeri.